The following is a 305-amino-acid chain: MVDANAFIDEAIADIKLKVGNGKALIALSGGVDSSVCAILAHRALGDRLIPVYVDTGLMRKGETDRIREIFKFMNPHVVDASDRFFNALKGVTDPEAKRKIVGEMFIRVFEDVVKGLEVDFLIQGTIYPDRIESEGGIKSHHNVGGLPSVTEFKGIIEPLQDLYKDEVREVARALPLPEEISERMPFPGPGLSVRVIGEVTREKIAVVREANAIVEQELVHQFKPWQCLAALLEKGTGVKGDNRCHGWIIAVRAVESRDAMTANHMELPWETLNKISSRITSEIPSVARVVYDITPKPPATIEFE.

In terms of domain architecture, GMPS ATP-PPase spans Val-2–Arg-184. Ser-29–Ser-35 lines the ATP pocket.

In terms of assembly, heterodimer composed of a glutamine amidotransferase subunit (A) and a GMP-binding subunit (B).

It carries out the reaction XMP + L-glutamine + ATP + H2O = GMP + L-glutamate + AMP + diphosphate + 2 H(+). It participates in purine metabolism; GMP biosynthesis; GMP from XMP (L-Gln route): step 1/1. In terms of biological role, catalyzes the synthesis of GMP from XMP. In Methanocella arvoryzae (strain DSM 22066 / NBRC 105507 / MRE50), this protein is GMP synthase [glutamine-hydrolyzing] subunit B.